A 265-amino-acid polypeptide reads, in one-letter code: Homeobox protein engrailed-2-A (265 aa).

2 stretches are compositionally biased toward basic and acidic residues: residues M1–E12 and G102–K115. Disordered regions lie at residues M1–H38, L75–Q140, and D156–T181. Residues D122–S136 show a composition bias toward low complexity. Positions D176–T235 form a DNA-binding region, homeobox.

This sequence belongs to the engrailed homeobox family.

The protein resides in the nucleus. The polypeptide is Homeobox protein engrailed-2-A (en2-a) (Xenopus laevis (African clawed frog)).